A 279-amino-acid polypeptide reads, in one-letter code: Succinate dehydrogenase [ubiquinone] iron-sulfur subunit 1, mitochondrial (279 aa).

The transit peptide at 1–28 (MASGLIGRLVGTKPSKLATAARLIPARW) directs the protein to the mitochondrion. Residues 52-141 (FQIYRWNPDN…ETTITPLPHM (90 aa)) form the 2Fe-2S ferredoxin-type domain. Residues Cys102, Cys107, and Cys122 each contribute to the [2Fe-2S] cluster site. One can recognise a 4Fe-4S ferredoxin-type domain in the interval 184-214 (DRAKLDGMYECILCACCSTSCPSYWWNPESY). [4Fe-4S] cluster-binding residues include Cys194, Cys197, and Cys200. Cys204 lines the [3Fe-4S] cluster pocket. Position 209 (Trp209) interacts with a ubiquinone. Residues Cys251 and Cys257 each contribute to the [3Fe-4S] cluster site. Cys261 contributes to the [4Fe-4S] cluster binding site.

This sequence belongs to the succinate dehydrogenase/fumarate reductase iron-sulfur protein family. In terms of assembly, component of complex II composed of eight subunits in plants: four classical SDH subunits SDH1, SDH2, SDH3 and SDH4 (a flavoprotein (FP), an iron-sulfur protein (IP), and a cytochrome b composed of a large and a small subunit.), as well as four subunits unknown in mitochondria from bacteria and heterotrophic eukaryotes. It depends on [2Fe-2S] cluster as a cofactor. [3Fe-4S] cluster is required as a cofactor. The cofactor is [4Fe-4S] cluster. Ubiquitous. Preferentially expressed in flowers and inflorescences.

Its subcellular location is the mitochondrion inner membrane. It carries out the reaction a quinone + succinate = fumarate + a quinol. Its pathway is carbohydrate metabolism; tricarboxylic acid cycle; fumarate from succinate (eukaryal route): step 1/1. Its function is as follows. Iron-sulfur protein (IP) subunit of succinate dehydrogenase (SDH) that is involved in complex II of the mitochondrial electron transport chain and is responsible for transferring electrons from succinate to ubiquinone (coenzyme Q). This is Succinate dehydrogenase [ubiquinone] iron-sulfur subunit 1, mitochondrial (SDH2-1) from Arabidopsis thaliana (Mouse-ear cress).